A 1132-amino-acid polypeptide reads, in one-letter code: Large proline-rich protein BAG6 (1132 aa).

Met-1 carries the post-translational modification N-acetylmethionine. The 76-residue stretch at 17–92 (LEVLVKTLDS…HLVERAPPQT (76 aa)) folds into the Ubiquitin-like domain. Disordered stretches follow at residues 87–126 (RAPP…SVHD) and 189–272 (LQCR…NHPS). The span at 95 to 108 (PSGASSGTGSASAT) shows a compositional bias: low complexity. A phosphoserine mark is found at Ser-96 and Ser-113. A Phosphothreonine modification is found at Thr-117. 2 stretches are compositionally biased toward pro residues: residues 200–210 (SQPPPQPPAVT) and 251–262 (TPGPAPAGPTPA). Repeat 1 spans residues 242–270 (RAPAQNPELTPGPAPAGPTPAPETNAPNH). Residues 242–636 (RAPAQNPELT…VASPTITVAM (395 aa)) form a 4 X 29 AA approximate repeats region. Phosphothreonine is present on Thr-350. 3 disordered regions span residues 385–441 (VTMT…TSHP), 461–528 (IQDS…TLQG), and 560–603 (PGMA…PSMA). Residues 393 to 407 (RPPPTPNAEAPPPGP) show a composition bias toward pro residues. A compositionally biased stretch (low complexity) spans 408 to 426 (GQASSVAPSSTNVESSAEG). Repeat 2 spans residues 415–443 (PSSTNVESSAEGAPPPGPAPPPATSHPRV). Composition is skewed to pro residues over residues 427–438 (APPPGPAPPPAT) and 507–520 (PTPP…PGGP). Positions 569–586 (ATASASAGTTNTATTAGP) are enriched in low complexity. A run of 2 repeats spans residues 574 to 602 (SAGT…QPSM) and 608 to 636 (SQLL…TVAM). Residues 588-599 (PGGPAQPPPTPQ) are compositionally biased toward pro residues. The disordered stretch occupies residues 651-692 (QATQTAPPPPPPPPPPPPAPEQQTMPPPGSPSGGAGSPGGLG). A compositionally biased stretch (pro residues) spans 656–680 (APPPPPPPPPPPPAPEQQTMPPPGS). Residues 681–692 (PSGGAGSPGGLG) show a composition bias toward gly residues. A phosphoserine mark is found at Val-832, Ser-964, and Ser-973. The disordered stretch occupies residues 947–1132 (PQPLPEEPME…NAQRAFADDP (186 aa)). Low complexity predominate over residues 1005–1020 (AETEPWAAAVPPEWVP). Positions 1010–1040 (WAAAVPPEWVPIIQQDIQSQRKVKPQPPLSD) are required for interaction with GET4. A Nuclear localization site motif is present at residues 1012 to 1054 (AAVPPEWVPIIQQDIQSQRKVKPQPPLSDAYLSGMPAKRRKTM). Residues 1022–1132 (IQQDIQSQRK…NAQRAFADDP (111 aa)) are sufficient for the delivery of client proteins to the endoplasmic reticulum. Residue Thr-1053 is modified to Phosphothreonine. Positions 1058–1115 (GPQLLLSEAVSRAAKAAGARPLTSPESLSRDLEAPEVQESYRQQLRSDIQKRLQEDPN) are BAG-similar domain, required and sufficient for interaction with UBL4A. Over residues 1066–1076 (AVSRAAKAAGA) the composition is skewed to low complexity. Ser-1081 and Ser-1117 each carry phosphoserine.

As to quaternary structure, component of the BAG6/BAT3 complex, also named BAT3 complex, at least composed of BAG6, UBL4A and GET4/TRC35. Interacts with GET4; the interaction is direct and localizes BAG6 in the cytosol. Interacts with UBL4A; the interaction is direct and required for UBL4A protein stability. Interacts with AIFM1. Interacts with HSPA2. Interacts with CTCFL. Interacts with p300/EP300. Interacts (via ubiquitin-like domain) with RNF126; required for BAG6-dependent ubiquitination of proteins mislocalized to the cytosol. Interacts (via ubiquitin-like domain) with SGTA; SGTA competes with RNF126 by binding the same region of BAG6, thereby promoting deubiquitination of BAG6-target proteins and rescuing them from degradation. Interacts with ricin A chain. Interacts with VCP and AMFR; both form the VCP/p97-AMFR/gp78 complex. Interacts with SYVN1. Interacts with USP13; the interaction is direct and may mediate UBL4A deubiquitination. Interacts with ZFAND2B. Interacts with KPNA2. Interacts with UBQLN4. In terms of assembly, (Microbial infection) Interacts with L.pneumophila Lpg2160 and LegU1 proteins. Post-translationally, ricin can induce a cleavage by the caspase CASP3. The released C-terminal peptide induces apoptosis. (Microbial infection) In case of infection by L.pneumophila, ubiquitinated by the SCF(LegU1) complex. As to expression, expressed by immature dendritic cells (at protein level).

Its subcellular location is the cytoplasm. The protein resides in the cytosol. It is found in the nucleus. It localises to the secreted. The protein localises to the extracellular exosome. In terms of biological role, ATP-independent molecular chaperone preventing the aggregation of misfolded and hydrophobic patches-containing proteins. Functions as part of a cytosolic protein quality control complex, the BAG6/BAT3 complex, which maintains these client proteins in a soluble state and participates in their proper delivery to the endoplasmic reticulum or alternatively can promote their sorting to the proteasome where they undergo degradation. The BAG6/BAT3 complex is involved in the post-translational delivery of tail-anchored/type II transmembrane proteins to the endoplasmic reticulum membrane. Recruited to ribosomes, it interacts with the transmembrane region of newly synthesized tail-anchored proteins and together with SGTA and ASNA1 mediates their delivery to the endoplasmic reticulum. Client proteins that cannot be properly delivered to the endoplasmic reticulum are ubiquitinated by RNF126, an E3 ubiquitin-protein ligase associated with BAG6 and are sorted to the proteasome. SGTA which prevents the recruitment of RNF126 to BAG6 may negatively regulate the ubiquitination and the proteasomal degradation of client proteins. Similarly, the BAG6/BAT3 complex also functions as a sorting platform for proteins of the secretory pathway that are mislocalized to the cytosol either delivering them to the proteasome for degradation or to the endoplasmic reticulum. The BAG6/BAT3 complex also plays a role in the endoplasmic reticulum-associated degradation (ERAD), a quality control mechanism that eliminates unwanted proteins of the endoplasmic reticulum through their retrotranslocation to the cytosol and their targeting to the proteasome. It maintains these retrotranslocated proteins in an unfolded yet soluble state condition in the cytosol to ensure their proper delivery to the proteasome. BAG6 is also required for selective ubiquitin-mediated degradation of defective nascent chain polypeptides by the proteasome. In this context, it may participate in the production of antigenic peptides and play a role in antigen presentation in immune response. BAG6 is also involved in endoplasmic reticulum stress-induced pre-emptive quality control, a mechanism that selectively attenuates the translocation of newly synthesized proteins into the endoplasmic reticulum and reroutes them to the cytosol for proteasomal degradation. BAG6 may ensure the proper degradation of these proteins and thereby protects the endoplasmic reticulum from protein overload upon stress. By inhibiting the polyubiquitination and subsequent proteasomal degradation of HSPA2 it may also play a role in the assembly of the synaptonemal complex during spermatogenesis. Also positively regulates apoptosis by interacting with and stabilizing the proapoptotic factor AIFM1. By controlling the steady-state expression of the IGF1R receptor, indirectly regulates the insulin-like growth factor receptor signaling pathway. Functionally, involved in DNA damage-induced apoptosis: following DNA damage, accumulates in the nucleus and forms a complex with p300/EP300, enhancing p300/EP300-mediated p53/TP53 acetylation leading to increase p53/TP53 transcriptional activity. When nuclear, may also act as a component of some chromatin regulator complex that regulates histone 3 'Lys-4' dimethylation (H3K4me2). Its function is as follows. Released extracellularly via exosomes, it is a ligand of the natural killer/NK cells receptor NCR3 and stimulates NK cells cytotoxicity. It may thereby trigger NK cells cytotoxicity against neighboring tumor cells and immature myeloid dendritic cells (DC). Mediates ricin-induced apoptosis. The polypeptide is Large proline-rich protein BAG6 (Homo sapiens (Human)).